The primary structure comprises 193 residues: ATP synthase subunit b 2 (193 aa).

A helical transmembrane segment spans residues 44–64; it reads IFWLVLTLLAIYFVLTKIALP.

The protein belongs to the ATPase B chain family. F-type ATPases have 2 components, F(1) - the catalytic core - and F(0) - the membrane proton channel. F(1) has five subunits: alpha(3), beta(3), gamma(1), delta(1), epsilon(1). F(0) has three main subunits: a(1), b(2) and c(10-14). The alpha and beta chains form an alternating ring which encloses part of the gamma chain. F(1) is attached to F(0) by a central stalk formed by the gamma and epsilon chains, while a peripheral stalk is formed by the delta and b chains.

It localises to the cell inner membrane. In terms of biological role, f(1)F(0) ATP synthase produces ATP from ADP in the presence of a proton or sodium gradient. F-type ATPases consist of two structural domains, F(1) containing the extramembraneous catalytic core and F(0) containing the membrane proton channel, linked together by a central stalk and a peripheral stalk. During catalysis, ATP synthesis in the catalytic domain of F(1) is coupled via a rotary mechanism of the central stalk subunits to proton translocation. Component of the F(0) channel, it forms part of the peripheral stalk, linking F(1) to F(0). The b'-subunit is a diverged and duplicated form of b found in plants and photosynthetic bacteria. The polypeptide is ATP synthase subunit b 2 (atpF2) (Jannaschia sp. (strain CCS1)).